Reading from the N-terminus, the 563-residue chain is DNA polymerase III subunit tau (563 aa).

45 to 52 (GPRGTGKT) serves as a coordination point for ATP. The Zn(2+) site is built by C64, C73, C76, and C79.

The protein belongs to the DnaX/STICHEL family. In terms of assembly, component of the DNA clamp loading complex consisting of tau(3):delta(1):delta'(1). The DNA polymerase III holoenzyme complex contains at least 10 different subunits organized into 3 functionally essential subassemblies: the Pol III core, the beta sliding clamp processivity factor and the clamp-loading complex. The Pol III core (subunits alpha, epsilon and theta) contains the polymerase and the 3'-5' exonuclease proofreading activities. The polymerase is tethered to the template via the dimeric beta sliding clamp processivity factor. The DNA clamp-loading complex assembles the beta sliding clamp onto the primed template and plays a central role in the organization and communication at the replication fork. Forms a complex with replicative DNA helicase DnaB (shown with G.stearothermophilus DnaB) tau(3):DnaB(6); a single ATP hydrolysis even is sufficient for complex formation. Colocalizes with DNA helicases PriA, RecQ and RecS.

The protein resides in the cytoplasm. Its subcellular location is the nucleoid. The catalysed reaction is DNA(n) + a 2'-deoxyribonucleoside 5'-triphosphate = DNA(n+1) + diphosphate. Part of the beta sliding clamp loading complex, which hydrolyzes ATP to load the beta clamp onto primed DNA to form the DNA replication pre-initiation complex. DNA polymerase III is a complex, multichain enzyme responsible for most of the replicative DNA synthesis in bacteria. This Bacillus subtilis (strain 168) protein is DNA polymerase III subunit tau.